A 209-amino-acid polypeptide reads, in one-letter code: Protein TIFY 11c (209 aa).

The 36-residue stretch at 93–128 (EITEKAQLTIFYGGSVVVFDDFPAEKAGELMKLAGS) folds into the Tify domain. Positions 153–177 (PIARKVSLQRFLEKRKNRIVVAEPL) match the Jas motif. The Nuclear localization signal motif lies at 155-162 (ARKVSLQR). Residues 175–209 (EPLPESEKKEAESSKRAKKDDGGASWLQVNPTLSL) are disordered. Over residues 179–196 (ESEKKEAESSKRAKKDDG) the composition is skewed to basic and acidic residues.

Belongs to the TIFY/JAZ family. In terms of processing, ubiquitinated. Targeted for degradation by the SCF(COI1) E3 ubiquitin ligase-proteasome pathway during jasmonate signaling.

The protein resides in the nucleus. Repressor of jasmonate responses. The chain is Protein TIFY 11c from Oryza sativa subsp. indica (Rice).